The sequence spans 332 residues: MKIPGSVITLLIGVVITVVSLWYGQNHGLMPVAASADAEKVDGIFNYMMTIATGLFLLVEGVLVYCLIRFRRRKDDQTDGPPIEGNVPLEILWTAIPTVIVFTLAVYSFEVYNNLGGLDPTISRDNAGQQMAHNHMGHMGSMGNMVAMAGDGDVALGIGLDSEEQGVNPLMVDVKGIQYAWIFTYPETGIISGELHAPIDRPVQLNMEAGDVIHAFWIPQLRLKQDVIPGRGSTLVFNASTPGQYPVICAELCGAYHGGMKSVFYAHTPEEYDDWVAANAPAPTESMAMTLPKATTAMTPNEYLAPYAKEMGVQTEALAQLKDQTSPVGDLL.

The signal sequence occupies residues 1-20; sequence MKIPGSVITLLIGVVITVVS. Helical transmembrane passes span 48–68 and 87–107; these read MMTIATGLFLLVEGVLVYCLI and VPLEILWTAIPTVIVFTLAVY. 4 residues coordinate Cu cation: His214, Cys249, Cys253, and His257.

This sequence belongs to the cytochrome c oxidase subunit 2 family. Requires Cu cation as cofactor.

The protein resides in the cell membrane. It carries out the reaction 4 Fe(II)-[cytochrome c] + O2 + 8 H(+)(in) = 4 Fe(III)-[cytochrome c] + 2 H2O + 4 H(+)(out). Functionally, subunits I and II form the functional core of the enzyme complex. Electrons originating in cytochrome c are transferred via heme a and Cu(A) to the binuclear center formed by heme a3 and Cu(B). This Synechocystis sp. (strain ATCC 27184 / PCC 6803 / Kazusa) protein is Cytochrome c oxidase subunit 2 (ctaC).